A 583-amino-acid chain; its full sequence is Isocitrate dehydrogenase kinase/phosphatase (583 aa).

ATP contacts are provided by residues 315-321 and K336; that span reads APGIRGM. D371 is a catalytic residue.

This sequence belongs to the AceK family.

Its subcellular location is the cytoplasm. It catalyses the reaction L-seryl-[isocitrate dehydrogenase] + ATP = O-phospho-L-seryl-[isocitrate dehydrogenase] + ADP + H(+). In terms of biological role, bifunctional enzyme which can phosphorylate or dephosphorylate isocitrate dehydrogenase (IDH) on a specific serine residue. This is a regulatory mechanism which enables bacteria to bypass the Krebs cycle via the glyoxylate shunt in response to the source of carbon. When bacteria are grown on glucose, IDH is fully active and unphosphorylated, but when grown on acetate or ethanol, the activity of IDH declines drastically concomitant with its phosphorylation. The polypeptide is Isocitrate dehydrogenase kinase/phosphatase (Salmonella gallinarum (strain 287/91 / NCTC 13346)).